Consider the following 128-residue polypeptide: MQRHMLKSKIHRAAVTHCELHYEGSCAIDEDLLEAAGLIENERIDIWNINNGERFSTYAIKGERGSGMISLNGSAARRAQLGDLVIIAAFAMVDEAELQAGWKPKLVFIDDGNKIKGHRDHVPTQNWT.

Ser-25 functions as the Schiff-base intermediate with substrate; via pyruvic acid in the catalytic mechanism. At Ser-25 the chain carries Pyruvic acid (Ser). Thr-57 serves as a coordination point for substrate. The active-site Proton donor is the Tyr-58. Residue 73-75 (GSA) coordinates substrate.

This sequence belongs to the PanD family. As to quaternary structure, heterooctamer of four alpha and four beta subunits. Pyruvate serves as cofactor. Post-translationally, is synthesized initially as an inactive proenzyme, which is activated by self-cleavage at a specific serine bond to produce a beta-subunit with a hydroxyl group at its C-terminus and an alpha-subunit with a pyruvoyl group at its N-terminus.

It is found in the cytoplasm. It catalyses the reaction L-aspartate + H(+) = beta-alanine + CO2. It participates in cofactor biosynthesis; (R)-pantothenate biosynthesis; beta-alanine from L-aspartate: step 1/1. Functionally, catalyzes the pyruvoyl-dependent decarboxylation of aspartate to produce beta-alanine. In Burkholderia cenocepacia (strain HI2424), this protein is Aspartate 1-decarboxylase.